Consider the following 172-residue polypeptide: RNA silencing suppressor p19 (172 aa).

The disordered stretch occupies residues 153–172 (EGNVSRGSPEGTEAFKEESE).

The protein belongs to the tombusvirus protein p19 family. As to quaternary structure, homodimer.

Viral suppressor of RNA silencing which binds specifically to silencing RNAs (siRNAs). Acts as a molecular caliper to specifically select siRNAs based on the length of the duplex region of the RNA. This is RNA silencing suppressor p19 from Pear latent virus (PeLV).